We begin with the raw amino-acid sequence, 534 residues long: Alkaline serine exoprotease A (534 aa).

The signal sequence occupies residues 1–21; sequence MLKKLLSCCITSALCFHSSLA. Residues 22–141 constitute a propeptide that is removed on maturation; the sequence is FSQPNEIADS…LSLDPIVSAD (120 aa). The 78-residue stretch at 57-134 folds into the Inhibitor I9 domain; the sequence is RYIVVFQQPQ…YIEQDRILSL (78 aa). One can recognise a Peptidase S8 domain in the interval 148–419; it reads IWGLDRIDQR…KLLYSLTDAD (272 aa). Active-site charge relay system residues include D180, H213, and S363. The interval 423 to 442 is disordered; that stretch reads DCGGPDPTPDPEGKLTSGVP.

This sequence belongs to the peptidase S8 family.

This chain is Alkaline serine exoprotease A (proA), found in Vibrio alginolyticus.